The sequence spans 389 residues: Cytochrome b (389 aa).

A run of 4 helical transmembrane segments spans residues 32-52 (FGSLLGICLVLQILTGCFLAM), 76-98 (WIVRYTHANVASFFFIFVYAHIG), 113-133 (LWSIGVIILVLMMAIGFLGYV), and 179-199 (FFSLHYILPFVLAALVVAHFM). Heme b-binding residues include His-82 and His-96. Heme b-binding residues include His-183 and His-197. A ubiquinone is bound at residue His-202. Transmembrane regions (helical) follow at residues 225–245 (FIFKDLVTIFAFFWILSVIVF), 289–309 (LLGVVAMFGSLLILLVLPLTD), 321–341 (AMKFFFWFFVVNFIMLFWLGS), and 348–368 (YLEIGQLSTTFYFSFFLVIVP).

Belongs to the cytochrome b family. Fungal cytochrome b-c1 complex contains 10 subunits; 3 respiratory subunits, 2 core proteins and 5 low-molecular weight proteins. Cytochrome b-c1 complex is a homodimer. The cofactor is heme b.

The protein resides in the mitochondrion inner membrane. Its function is as follows. Component of the ubiquinol-cytochrome c reductase complex (complex III or cytochrome b-c1 complex) that is part of the mitochondrial respiratory chain. The b-c1 complex mediates electron transfer from ubiquinol to cytochrome c. Contributes to the generation of a proton gradient across the mitochondrial membrane that is then used for ATP synthesis. The protein is Cytochrome b (COB) of Strobilurus tenacellus.